The chain runs to 788 residues: Endonuclease MutS2 (788 aa).

335–342 (GPNTGGKT) contacts ATP. A disordered region spans residues 688-708 (VKSASKTKKRSGGTSITKQSA). A compositionally biased stretch (polar residues) spans 699–708 (GGTSITKQSA). Residues 713–788 (LDLRGVRVEE…GHGVTIIELK (76 aa)) enclose the Smr domain.

Belongs to the DNA mismatch repair MutS family. MutS2 subfamily. As to quaternary structure, homodimer. Binds to stalled ribosomes, contacting rRNA.

Endonuclease that is involved in the suppression of homologous recombination and thus may have a key role in the control of bacterial genetic diversity. Its function is as follows. Acts as a ribosome collision sensor, splitting the ribosome into its 2 subunits. Detects stalled/collided 70S ribosomes which it binds and splits by an ATP-hydrolysis driven conformational change. Acts upstream of the ribosome quality control system (RQC), a ribosome-associated complex that mediates the extraction of incompletely synthesized nascent chains from stalled ribosomes and their subsequent degradation. Probably generates substrates for RQC. In Exiguobacterium sibiricum (strain DSM 17290 / CCUG 55495 / CIP 109462 / JCM 13490 / 255-15), this protein is Endonuclease MutS2.